The chain runs to 135 residues: Protein NrdI (135 aa).

Belongs to the NrdI family.

Probably involved in ribonucleotide reductase function. The sequence is that of Protein NrdI from Pectobacterium atrosepticum (strain SCRI 1043 / ATCC BAA-672) (Erwinia carotovora subsp. atroseptica).